A 156-amino-acid polypeptide reads, in one-letter code: Large ribosomal subunit protein uL15 (156 aa).

Residues 29–48 (CGKGKTSGRGHKGQKARSGV) form a disordered region. The segment covering 34 to 43 (TSGRGHKGQK) has biased composition (basic residues).

It belongs to the universal ribosomal protein uL15 family. As to quaternary structure, part of the 50S ribosomal subunit.

Its function is as follows. Binds to the 23S rRNA. The protein is Large ribosomal subunit protein uL15 of Ehrlichia chaffeensis (strain ATCC CRL-10679 / Arkansas).